A 657-amino-acid polypeptide reads, in one-letter code: MTQLAIGKPAPLGAHYDGQGVNFTLFSAHAERVELCVFDANGQEHRYDLPGHSGDIWHGYLPDARPGLRYGYRVHGPWQPAEGHRFNPAKLLIDPCARQIDGEFKDNPLLHAGHNEPDYRDNAAIAPKCVVVVDHYDWEDDAPPRTPWGSTIIYEAHVKGLTYLHPEIPVEIRGTYKALGHPVMINYLKQLGITALELLPVAQFASEPRLQRMGLSNYWGYNPVAMFALHPAYACSPETALDEFRDAIKALHKAGIEVILDIVLNHSAELDLDGPLFSLRGIDNRSYYWIREDGDYHNWTGCGNTLNLSHPAVVDYASACLRYWVETCHVDGFRFDLAAVMGRTPEFRQDAPLFTAIQNCPVLSQVKLIAEPWDIAPGGYQVGNFPPLFAEWNDHFRDAARRFWLHYDLPLGAFAGRFAASSDVFKRNGRLPSAAINLVTAHDGFTLRDCVCFNHKHNEANGEENRDGTNNNYSNNHGKEGLGGSLDLVERRRDSIHALLTTLLLSQGTPMLLAGDEHGHSQYGNNNAYCQDNQLTWLDWSQASSGLTAFTAALIHLRKRIPALVENRWWEEGDGNVRWLNRYAQPLSTDEWQNGPKQLQILLSDRFLIAINATLEVTEIVLPAGEWHAIPPFAGEDNPVITAVWQGPAHGLCVFQR.

The active-site Nucleophile is Asp-336. The active-site Proton donor is the Glu-371. A compositionally biased stretch (basic and acidic residues) spans 458–467; sequence NEANGEENRD. The tract at residues 458 to 479 is disordered; sequence NEANGEENRDGTNNNYSNNHGK.

Belongs to the glycosyl hydrolase 13 family.

It catalyses the reaction Hydrolysis of (1-&gt;6)-alpha-D-glucosidic linkages to branches with degrees of polymerization of three or four glucose residues in limit dextrin.. Its pathway is glycan degradation; glycogen degradation. Removes maltotriose and maltotetraose chains that are attached by 1,6-alpha-linkage to the limit dextrin main chain, generating a debranched limit dextrin. The sequence is that of Glycogen debranching enzyme from Escherichia coli O139:H28 (strain E24377A / ETEC).